Here is a 283-residue protein sequence, read N- to C-terminus: Thymidylate synthase (283 aa).

Residue R22 participates in dUMP binding. Residue C160 is the Nucleophile of the active site. DUMP-binding positions include 180–183, N191, and 221–223; these read RSCD and HIY. (6R)-5,10-methylene-5,6,7,8-tetrahydrofolate is bound at residue D183. (6R)-5,10-methylene-5,6,7,8-tetrahydrofolate is bound at residue S282.

Belongs to the thymidylate synthase family. Bacterial-type ThyA subfamily. In terms of assembly, homodimer.

It is found in the cytoplasm. The catalysed reaction is dUMP + (6R)-5,10-methylene-5,6,7,8-tetrahydrofolate = 7,8-dihydrofolate + dTMP. It functions in the pathway pyrimidine metabolism; dTTP biosynthesis. Its function is as follows. Catalyzes the reductive methylation of 2'-deoxyuridine-5'-monophosphate (dUMP) to 2'-deoxythymidine-5'-monophosphate (dTMP) while utilizing 5,10-methylenetetrahydrofolate (mTHF) as the methyl donor and reductant in the reaction, yielding dihydrofolate (DHF) as a by-product. This enzymatic reaction provides an intracellular de novo source of dTMP, an essential precursor for DNA biosynthesis. In Vibrio cholerae serotype O1 (strain ATCC 39315 / El Tor Inaba N16961), this protein is Thymidylate synthase.